Here is a 313-residue protein sequence, read N- to C-terminus: D-alanine--D-alanine ligase (313 aa).

The region spanning 104–304 (KQALVPHGIP…YSDLVEAIIA (201 aa)) is the ATP-grasp domain. 130 to 187 (PLPRPYVLKPVNEGSSVGVAIVTAEGNYGSPISAASKGPWQEFDQLLAEPFIRGRELT) contributes to the ATP binding site. 3 residues coordinate Mg(2+): D255, E271, and N273.

It belongs to the D-alanine--D-alanine ligase family. Requires Mg(2+) as cofactor. Mn(2+) serves as cofactor.

Its subcellular location is the cytoplasm. The enzyme catalyses 2 D-alanine + ATP = D-alanyl-D-alanine + ADP + phosphate + H(+). Its pathway is cell wall biogenesis; peptidoglycan biosynthesis. Functionally, cell wall formation. This Novosphingobium aromaticivorans (strain ATCC 700278 / DSM 12444 / CCUG 56034 / CIP 105152 / NBRC 16084 / F199) protein is D-alanine--D-alanine ligase.